The sequence spans 560 residues: Potassium-transporting ATPase potassium-binding subunit (560 aa).

A run of 12 helical transmembrane segments spans residues 6-26 (FLLIASFLLVLMALAKPLGSL), 63-83 (LLAILLFNTLGLVLLFAILMC), 132-152 (GLAVQNFLSAATGIAVAFALI), 175-195 (LWVLMPISLIIALFFIQQGAI), 250-270 (LTNVVQMLAIFLIPAALCFAF), 282-302 (AILWTMTVIFVVCVALVMWAE), 327-347 (FGILASSLFAVVTTAASCGAV), 356-376 (ALGGMIPMWLMQIGEVVFGGV), 379-399 (GLYGMLLFVLLGVFIAGLMIG), 416-436 (MTALAILVTPALVLLGTALAM), 483-503 (LLLAFCMWFGRFLVIIPVMAI), and 524-544 (GALFIGLLTGTVLLVGALTFI).

The protein belongs to the KdpA family. As to quaternary structure, the system is composed of three essential subunits: KdpA, KdpB and KdpC.

The protein resides in the cell inner membrane. Functionally, part of the high-affinity ATP-driven potassium transport (or Kdp) system, which catalyzes the hydrolysis of ATP coupled with the electrogenic transport of potassium into the cytoplasm. This subunit binds the periplasmic potassium ions and delivers the ions to the membrane domain of KdpB through an intramembrane tunnel. In Cronobacter sakazakii (strain ATCC BAA-894) (Enterobacter sakazakii), this protein is Potassium-transporting ATPase potassium-binding subunit.